Reading from the N-terminus, the 335-residue chain is 4-hydroxy-3-methylbut-2-enyl diphosphate reductase (335 aa).

Cysteine 14 is a binding site for [4Fe-4S] cluster. Positions 43 and 81 each coordinate (2E)-4-hydroxy-3-methylbut-2-enyl diphosphate. Residues histidine 43 and histidine 81 each coordinate dimethylallyl diphosphate. Residues histidine 43 and histidine 81 each contribute to the isopentenyl diphosphate site. Cysteine 103 serves as a coordination point for [4Fe-4S] cluster. Residue histidine 132 participates in (2E)-4-hydroxy-3-methylbut-2-enyl diphosphate binding. Residue histidine 132 coordinates dimethylallyl diphosphate. Histidine 132 lines the isopentenyl diphosphate pocket. Glutamate 134 acts as the Proton donor in catalysis. Threonine 179 is a binding site for (2E)-4-hydroxy-3-methylbut-2-enyl diphosphate. Cysteine 209 is a binding site for [4Fe-4S] cluster. (2E)-4-hydroxy-3-methylbut-2-enyl diphosphate contacts are provided by serine 237, serine 238, asparagine 239, and serine 285. Positions 237, 238, 239, and 285 each coordinate dimethylallyl diphosphate. Serine 237, serine 238, asparagine 239, and serine 285 together coordinate isopentenyl diphosphate.

The protein belongs to the IspH family. Requires [4Fe-4S] cluster as cofactor.

The enzyme catalyses isopentenyl diphosphate + 2 oxidized [2Fe-2S]-[ferredoxin] + H2O = (2E)-4-hydroxy-3-methylbut-2-enyl diphosphate + 2 reduced [2Fe-2S]-[ferredoxin] + 2 H(+). It catalyses the reaction dimethylallyl diphosphate + 2 oxidized [2Fe-2S]-[ferredoxin] + H2O = (2E)-4-hydroxy-3-methylbut-2-enyl diphosphate + 2 reduced [2Fe-2S]-[ferredoxin] + 2 H(+). Its pathway is isoprenoid biosynthesis; dimethylallyl diphosphate biosynthesis; dimethylallyl diphosphate from (2E)-4-hydroxy-3-methylbutenyl diphosphate: step 1/1. It functions in the pathway isoprenoid biosynthesis; isopentenyl diphosphate biosynthesis via DXP pathway; isopentenyl diphosphate from 1-deoxy-D-xylulose 5-phosphate: step 6/6. Catalyzes the conversion of 1-hydroxy-2-methyl-2-(E)-butenyl 4-diphosphate (HMBPP) into a mixture of isopentenyl diphosphate (IPP) and dimethylallyl diphosphate (DMAPP). Acts in the terminal step of the DOXP/MEP pathway for isoprenoid precursor biosynthesis. This Deinococcus radiodurans (strain ATCC 13939 / DSM 20539 / JCM 16871 / CCUG 27074 / LMG 4051 / NBRC 15346 / NCIMB 9279 / VKM B-1422 / R1) protein is 4-hydroxy-3-methylbut-2-enyl diphosphate reductase.